The sequence spans 445 residues: Tubulin beta-1 chain (445 aa).

Positions 11, 69, 138, 142, 143, 144, 204, and 226 each coordinate GTP. E69 lines the Mg(2+) pocket. The interval 426 to 445 (QDATAEDEEEYEDEEEEMAA) is disordered. Residues 429-445 (TAEDEEEYEDEEEEMAA) show a composition bias toward acidic residues.

The protein belongs to the tubulin family. In terms of assembly, dimer of alpha and beta chains. A typical microtubule is a hollow water-filled tube with an outer diameter of 25 nm and an inner diameter of 15 nM. Alpha-beta heterodimers associate head-to-tail to form protofilaments running lengthwise along the microtubule wall with the beta-tubulin subunit facing the microtubule plus end conferring a structural polarity. Microtubules usually have 13 protofilaments but different protofilament numbers can be found in some organisms and specialized cells. Mg(2+) is required as a cofactor.

The protein resides in the cytoplasm. Its subcellular location is the cytoskeleton. In terms of biological role, tubulin is the major constituent of microtubules, a cylinder consisting of laterally associated linear protofilaments composed of alpha- and beta-tubulin heterodimers. Microtubules grow by the addition of GTP-tubulin dimers to the microtubule end, where a stabilizing cap forms. Below the cap, tubulin dimers are in GDP-bound state, owing to GTPase activity of alpha-tubulin. The chain is Tubulin beta-1 chain (TUBB1) from Eleusine indica (Goosegrass).